Here is a 154-residue protein sequence, read N- to C-terminus: Fimbrial protein (154 aa).

The propeptide at 1-6 (MNAQKG) is leader sequence. N-methylphenylalanine is present on phenylalanine 7. The chain crosses the membrane as a helical span at residues 7–29 (FTLIELMIVIAIIGILAAIALPA).

This sequence belongs to the N-Me-Phe pilin family. As to quaternary structure, the pili are polar flexible filaments of about 5.4 nanometers diameter and 2.5 micrometers average length; they consist of only a single polypeptide chain arranged in a helical configuration of five subunits per turn in the assembled pilus.

It localises to the fimbrium. Its subcellular location is the membrane. This chain is Fimbrial protein (tfpA), found in Moraxella nonliquefaciens.